The chain runs to 1070 residues: MKLKNLYIENIRSYKKLDFTFEDGVTVISGVNGSGKSSLLEACFMGLFGSKILSKDFVLADMIFKGAESAKIHLGFEHLGREYLIEQAFRYSLKSENASNSRCVLFADGENIVDQATRTYEEVCALLNMDEEAYRNCAYIRQGEIDVLINAKPRDRQRMIDDLLQLGKLEEYRERAGYAKTAVRRLERDAKNSFLGVKAEIEGIESTEPVAAVNRLRQKVKETDAILEELNKKKEFAAARKGELDLRIAEYRERLQEIEVLKQAIRKSQEDKAACFKEKETFSEEVQVQRRVLLELGEENSGMREECGFGDLEIEALLLQQEKSESSAREKVNSGSKELALLLKEEETGVQALRELEKDKVETERVLVECRTSIGAANKEIEGYRANIKQLEEENKRLREKAGFGAAGEIASVIKELEEKESLLRDRKNEVSTKLGFALKEKESGDASLRELDSEMQSCRVAVSKGKSEIEALEKEIRDNSKAVLDFQEQKSEVFAGLKALGFTEEQLENLEDFNELLLENKNRLHGKEKELEVTLREIENTLRKNRELLAEGKCPTCGQELKGSGIACTAEECEEKKEKLSLELADIKLQRAELEKKLNRLKEAKKLEKQAYDYDIEIEKLLEKAKASEKLIDTHRTRIEEDSLKLESSGKRKQELEAAGSKLLLDIKALREQEKAAQKVHLESEKALREAKVFERKLAENASEIESLNGKIRTSLALIENYGQRLGELNEKLKAFAEKETQSKEKLEALELTLETARKNEEEAKKAHIESARLLGEAKKLQANLLRMQNIKHKISEFEAGIGNLAEKIGFFDREIVERSDRIRQLEGKLEGNRLEELQQKLARFEEAQVNITEKIREITAEKDTLLKEIGMIENSLKRLKELKEELKALENKRLYLEAVYNNADELENTYMRVRADMRARNIGALSILLNEMFSFMYTNNAYSHIELDPEYNLTVYRKDGTPLEPKLLSGGERAIFNLVLRCAIYRLLALGFGGDRPDGLPPMILDEPTVFLDRGHVRQLLKLIDMMRSIGVGQIIVVSHDESLIDSADHVFQVEKDPLTNMSSITKI.

ATP contacts are provided by residues arginine 12, 32–38 (NGSGKSS), and glutamine 142. 3 coiled-coil regions span residues 227–257 (LEEL…RLQE), 369–403 (ECRT…EKAG), and 449–478 (LREL…KEIR). A Zinc-hook domain is found at 508 to 607 (LENLEDFNEL…KLNRLKEAKK (100 aa)). Positions 555 and 558 each coordinate Zn(2+). Coiled coils occupy residues 570–614 (TAEE…QAYD) and 878–908 (LKRL…ADEL). Position 969–974 (969–974 (LLSGGE)) interacts with ATP.

Belongs to the SMC family. RAD50 subfamily. Homodimer. Forms a heterotetramer composed of two Mre11 subunits and two Rad50 subunits. Zn(2+) serves as cofactor.

Functionally, part of the Rad50/Mre11 complex, which is involved in the early steps of DNA double-strand break (DSB) repair. The complex may facilitate opening of the processed DNA ends to aid in the recruitment of HerA and NurA. Rad50 controls the balance between DNA end bridging and DNA resection via ATP-dependent structural rearrangements of the Rad50/Mre11 complex. The sequence is that of DNA double-strand break repair Rad50 ATPase from Methanosarcina mazei (strain ATCC BAA-159 / DSM 3647 / Goe1 / Go1 / JCM 11833 / OCM 88) (Methanosarcina frisia).